The sequence spans 222 residues: Flagellar L-ring protein (222 aa).

Residues 1–18 (MKTTRAIAMLGLLLGLAA) form the signal peptide. C19 carries the N-palmitoyl cysteine lipid modification. The S-diacylglycerol cysteine moiety is linked to residue C19.

This sequence belongs to the FlgH family. The basal body constitutes a major portion of the flagellar organelle and consists of four rings (L,P,S, and M) mounted on a central rod.

Its subcellular location is the cell outer membrane. The protein resides in the bacterial flagellum basal body. Functionally, assembles around the rod to form the L-ring and probably protects the motor/basal body from shearing forces during rotation. The chain is Flagellar L-ring protein from Thiobacillus denitrificans (strain ATCC 25259 / T1).